Reading from the N-terminus, the 335-residue chain is Type 1 fimbrin D-mannose specific adhesin (335 aa).

A signal peptide spans 1–22 (MKIYSALLLAGTALFFTHPALA).

It belongs to the fimbrial protein family.

Its subcellular location is the fimbrium. Its function is as follows. Involved in regulation of length and mediation of adhesion of type 1 fimbriae (but not necessary for the production of fimbriae). A mannose-binding adhesin. The polypeptide is Type 1 fimbrin D-mannose specific adhesin (fimH) (Salmonella typhimurium (strain LT2 / SGSC1412 / ATCC 700720)).